The following is a 464-amino-acid chain: tRNA-2-methylthio-N(6)-dimethylallyladenosine synthase (464 aa).

The MTTase N-terminal domain occupies 4-119; it reads RTFHIMTFGC…APQAIERLVQ (116 aa). Residues C13, C48, C82, C158, C162, and C165 each contribute to the [4Fe-4S] cluster site. Residues 144-375 form the Radical SAM core domain; sequence GEVPVSAYVN…QEVQNEYSEA (232 aa). Positions 378–461 constitute a TRAM domain; sequence QAMVGKTVMV…KHSLTGEPAG (84 aa). Residues 393–420 form a disordered region; it reads SPKSAAGSGTDAQNAAEESGRTASSWQG.

Belongs to the methylthiotransferase family. MiaB subfamily. In terms of assembly, monomer. Requires [4Fe-4S] cluster as cofactor.

It is found in the cytoplasm. The catalysed reaction is N(6)-dimethylallyladenosine(37) in tRNA + (sulfur carrier)-SH + AH2 + 2 S-adenosyl-L-methionine = 2-methylsulfanyl-N(6)-dimethylallyladenosine(37) in tRNA + (sulfur carrier)-H + 5'-deoxyadenosine + L-methionine + A + S-adenosyl-L-homocysteine + 2 H(+). Functionally, catalyzes the methylthiolation of N6-(dimethylallyl)adenosine (i(6)A), leading to the formation of 2-methylthio-N6-(dimethylallyl)adenosine (ms(2)i(6)A) at position 37 in tRNAs that read codons beginning with uridine. In Oleidesulfovibrio alaskensis (strain ATCC BAA-1058 / DSM 17464 / G20) (Desulfovibrio alaskensis), this protein is tRNA-2-methylthio-N(6)-dimethylallyladenosine synthase.